The chain runs to 475 residues: Ribulose bisphosphate carboxylase large chain (475 aa).

Positions 1–2 are excised as a propeptide; it reads MS. Residue P3 is modified to N-acetylproline. Residue K14 is modified to N6,N6,N6-trimethyllysine. Substrate contacts are provided by N123 and T173. The active-site Proton acceptor is the K175. A substrate-binding site is contributed by K177. Residues K201, D203, and E204 each contribute to the Mg(2+) site. K201 carries the N6-carboxylysine modification. H294 serves as the catalytic Proton acceptor. Substrate-binding residues include R295, H327, and S379.

This sequence belongs to the RuBisCO large chain family. Type I subfamily. Heterohexadecamer of 8 large chains and 8 small chains; disulfide-linked. The disulfide link is formed within the large subunit homodimers. The cofactor is Mg(2+). The disulfide bond which can form in the large chain dimeric partners within the hexadecamer appears to be associated with oxidative stress and protein turnover.

It localises to the plastid. It is found in the chloroplast. It catalyses the reaction 2 (2R)-3-phosphoglycerate + 2 H(+) = D-ribulose 1,5-bisphosphate + CO2 + H2O. It carries out the reaction D-ribulose 1,5-bisphosphate + O2 = 2-phosphoglycolate + (2R)-3-phosphoglycerate + 2 H(+). RuBisCO catalyzes two reactions: the carboxylation of D-ribulose 1,5-bisphosphate, the primary event in carbon dioxide fixation, as well as the oxidative fragmentation of the pentose substrate in the photorespiration process. Both reactions occur simultaneously and in competition at the same active site. In Calycanthus floridus var. glaucus (Eastern sweetshrub), this protein is Ribulose bisphosphate carboxylase large chain.